A 788-amino-acid chain; its full sequence is Integrin beta-6 (788 aa).

The signal sequence occupies residues 1-21; the sequence is MGIELLCLFFLFLGRNDHVQG. Residues 22-71 form the PSI domain; sequence GCALGGAETCEDCLLIGPQCAWCSQENFTYLSGVGERCDTPANLLAKGCQ. Residues 22–709 are Extracellular-facing; it reads GCALGGAETC…KDCPKPPNSP (688 aa). Intrachain disulfides connect Cys23–Cys41, Cys31–Cys454, Cys34–Cys59, Cys44–Cys70, Cys197–Cys204, Cys252–Cys293, Cys394–Cys406, Cys426–Cys452, Cys456–Cys476, Cys467–Cys479, Cys481–Cys490, Cys492–Cys519, Cys502–Cys517, Cys511–Cys522, Cys524–Cys537, Cys539–Cys560, Cys544–Cys558, Cys552–Cys563, Cys565–Cys574, Cys576–Cys599, Cys583–Cys597, Cys591–Cys602, Cys604–Cys614, Cys617–Cys620, Cys624–Cys670, Cys630–Cys649, Cys633–Cys645, and Cys678–Cys702. N-linked (GlcNAc...) asparagine glycosylation is found at Asn48 and Asn97. The VWFA domain maps to 131 to 371; the sequence is YPVDLYYLMD…QLIISAYEEL (241 aa). Mg(2+) is bound by residues Asp140, Ser142, and Ser144. Ca(2+) contacts are provided by Ser144, Asp147, Asp148, and Glu179. Ca(2+) is bound by residues Asn235, Asp237, Pro239, and Glu240. A Mg(2+)-binding site is contributed by Glu240. Residue Asn260 is glycosylated (N-linked (GlcNAc...) asparagine). Positions 271 and 355 each coordinate Ca(2+). N-linked (GlcNAc...) asparagine glycosylation occurs at Asn387. Asn418 is a glycosylation site (N-linked (GlcNAc...) asparagine). I-EGF domains are found at residues 456 to 491, 492 to 538, 539 to 575, and 576 to 615; these read CQKE…PHCE, CGED…PYCQ, CDDF…EYCN, and CTTS…LTCE. N-linked (GlcNAc...) asparagine glycosylation is found at Asn463 and Asn471. A helical membrane pass occupies residues 710 to 730; that stretch reads MIMLGVSLAILLIGVVLLCIW. The interaction with HAX1 stretch occupies residues 731-758; the sequence is KLLVSFHDRKEVAKFEAERSKAKWQTGT. Residues 731-788 lie on the Cytoplasmic side of the membrane; that stretch reads KLLVSFHDRKEVAKFEAERSKAKWQTGTNPLYRGSTSTFKNVTYKHREKQKVDLSMDG.

The protein belongs to the integrin beta chain family. As to quaternary structure, heterodimer of an alpha and a beta subunit. Interacts with FLNB. Interacts with HAX1. ITGAV:ITGB6 interacts with FBN1. ITGAV:ITGB6 interacts with TGFB1.

The protein localises to the cell membrane. Its subcellular location is the cell junction. It localises to the focal adhesion. Its function is as follows. Integrin alpha-V:beta-6 (ITGAV:ITGB6) is a receptor for fibronectin and cytotactin. It recognizes the sequence R-G-D in its ligands. ITGAV:ITGB6 acts as a receptor for fibrillin-1 (FBN1) and mediates R-G-D-dependent cell adhesion to FBN1. Integrin alpha-V:beta-6 (ITGAV:ITGB6) mediates R-G-D-dependent release of transforming growth factor beta-1 (TGF-beta-1) from regulatory Latency-associated peptide (LAP), thereby playing a key role in TGF-beta-1 activation. This Sus scrofa (Pig) protein is Integrin beta-6 (ITGB6).